The following is a 658-amino-acid chain: Probable rhamnogalacturonate lyase B (658 aa).

Positions 1-19 (MRFAIPLGAACAWAGVALA) are cleaved as a signal peptide. N-linked (GlcNAc...) asparagine glycosylation is found at asparagine 110, asparagine 143, asparagine 239, asparagine 280, asparagine 522, asparagine 530, asparagine 592, and asparagine 633.

This sequence belongs to the polysaccharide lyase 4 family.

The protein resides in the secreted. It catalyses the reaction Endotype eliminative cleavage of L-alpha-rhamnopyranosyl-(1-&gt;4)-alpha-D-galactopyranosyluronic acid bonds of rhamnogalacturonan I domains in ramified hairy regions of pectin leaving L-rhamnopyranose at the reducing end and 4-deoxy-4,5-unsaturated D-galactopyranosyluronic acid at the non-reducing end.. Functionally, pectinolytic enzymes consist of four classes of enzymes: pectin lyase, polygalacturonase, pectin methylesterase and rhamnogalacturonase. Degrades the rhamnogalacturonan I (RG-I) backbone of pectin. This is Probable rhamnogalacturonate lyase B (rglB) from Aspergillus fumigatus (strain CBS 144.89 / FGSC A1163 / CEA10) (Neosartorya fumigata).